The following is a 504-amino-acid chain: Probable cytosol aminopeptidase (504 aa).

Mn(2+)-binding residues include lysine 274 and aspartate 279. Residue lysine 286 is part of the active site. Positions 297, 356, and 358 each coordinate Mn(2+). Arginine 360 is an active-site residue.

This sequence belongs to the peptidase M17 family. Mn(2+) serves as cofactor.

It localises to the cytoplasm. The enzyme catalyses Release of an N-terminal amino acid, Xaa-|-Yaa-, in which Xaa is preferably Leu, but may be other amino acids including Pro although not Arg or Lys, and Yaa may be Pro. Amino acid amides and methyl esters are also readily hydrolyzed, but rates on arylamides are exceedingly low.. It catalyses the reaction Release of an N-terminal amino acid, preferentially leucine, but not glutamic or aspartic acids.. Its function is as follows. Presumably involved in the processing and regular turnover of intracellular proteins. Catalyzes the removal of unsubstituted N-terminal amino acids from various peptides. This chain is Probable cytosol aminopeptidase, found in Gloeobacter violaceus (strain ATCC 29082 / PCC 7421).